A 725-amino-acid polypeptide reads, in one-letter code: Consortin (725 aa).

Disordered stretches follow at residues 1 to 72, 103 to 124, 296 to 353, 375 to 397, and 485 to 510; these read MDDS…LNNN, GKDKKIPGKRSPRSKKGTAKKI, LLVS…SLSV, TQSSETAGSPSGPDSSEDACEDD, and QQPDLTDSDGKSPQAQADSDGSENVL. At 1-664 the chain is on the cytoplasmic side; sequence MDDSDTPTYY…LDQDEVGGGS (664 aa). Residues 63–72 show a composition bias toward polar residues; sequence VSEQDSLNNN. The segment covering 109-121 has biased composition (basic residues); the sequence is PGKRSPRSKKGTA. Residues 300-314 are compositionally biased toward basic and acidic residues; sequence EDPKEGGATTKESES. 2 stretches are compositionally biased toward polar residues: residues 343-353 and 375-388; these read DVQTDSPSLSV and TQSSETAGSPSGPD. Residues 665–685 form a helical membrane-spanning segment; that stretch reads CILLVLLCIATVFLSVGGTAL. At 686 to 725 the chain is on the extracellular side; it reads YCTFGDMESPVCTDFADNMDFYYTKLLQGVAELKHWIYLS.

The protein belongs to the CNST family. In terms of assembly, interacts with connexins GJA1/CX43, GJB1/CX32, GJB2/CX26, GJB3/CX31, GJB6/CX30 and GJC1/CX45. Also interacts with GGA1 and GGA2. Does not interact with PANX1.

Its subcellular location is the cell membrane. The protein localises to the golgi apparatus. It is found in the trans-Golgi network membrane. It localises to the cytoplasmic vesicle. The protein resides in the secretory vesicle. In terms of biological role, required for targeting of connexins to the plasma membrane. This chain is Consortin (CNST), found in Homo sapiens (Human).